The chain runs to 293 residues: Nitrogenase iron protein (293 aa).

10–17 (GKGGIGKS) serves as a coordination point for ATP. C98 is a binding site for [4Fe-4S] cluster. ADP-ribosylarginine; by dinitrogenase reductase ADP-ribosyltransferase is present on R101. C133 serves as a coordination point for [4Fe-4S] cluster.

The protein belongs to the NifH/BchL/ChlL family. As to quaternary structure, homodimer. Requires [4Fe-4S] cluster as cofactor. The reversible ADP-ribosylation of Arg-101 inactivates the nitrogenase reductase and regulates nitrogenase activity.

The catalysed reaction is N2 + 8 reduced [2Fe-2S]-[ferredoxin] + 16 ATP + 16 H2O = H2 + 8 oxidized [2Fe-2S]-[ferredoxin] + 2 NH4(+) + 16 ADP + 16 phosphate + 6 H(+). The key enzymatic reactions in nitrogen fixation are catalyzed by the nitrogenase complex, which has 2 components: the iron protein and the molybdenum-iron protein. This Pectobacterium atrosepticum (strain SCRI 1043 / ATCC BAA-672) (Erwinia carotovora subsp. atroseptica) protein is Nitrogenase iron protein.